Reading from the N-terminus, the 397-residue chain is Lipoyl synthase 2, chloroplastic (397 aa).

A chloroplast-targeting transit peptide spans 1 to 35; the sequence is MIEQSLSKPSFSLSIPIPKAPKSKSSFFCSYSKIR. The interval 49–85 is disordered; sequence AKHPQNSTTINNGSSSSASVDLKNNEKGPYPYPGGGK. The span at 54–67 shows a compositional bias: low complexity; that stretch reads NSTTINNGSSSSAS. 7 residues coordinate [4Fe-4S] cluster: Cys-128, Cys-133, Cys-139, Cys-159, Cys-163, Cys-166, and Ser-374. One can recognise a Radical SAM core domain in the interval 142 to 363; that stretch reads GGGDGIATAT…KEYGESIGFR (222 aa).

It belongs to the radical SAM superfamily. Lipoyl synthase family. The cofactor is [4Fe-4S] cluster.

It localises to the plastid. Its subcellular location is the chloroplast. The catalysed reaction is [[Fe-S] cluster scaffold protein carrying a second [4Fe-4S](2+) cluster] + N(6)-octanoyl-L-lysyl-[protein] + 2 oxidized [2Fe-2S]-[ferredoxin] + 2 S-adenosyl-L-methionine + 4 H(+) = [[Fe-S] cluster scaffold protein] + N(6)-[(R)-dihydrolipoyl]-L-lysyl-[protein] + 4 Fe(3+) + 2 hydrogen sulfide + 2 5'-deoxyadenosine + 2 L-methionine + 2 reduced [2Fe-2S]-[ferredoxin]. Its pathway is protein modification; protein lipoylation via endogenous pathway; protein N(6)-(lipoyl)lysine from octanoyl-[acyl-carrier-protein]: step 2/2. Its function is as follows. Catalyzes the radical-mediated insertion of two sulfur atoms into the C-6 and C-8 positions of the octanoyl moiety bound to the lipoyl domains of lipoate-dependent enzymes, thereby converting the octanoylated domains into lipoylated derivatives. This Populus trichocarpa (Western balsam poplar) protein is Lipoyl synthase 2, chloroplastic.